The sequence spans 1669 residues: Polycomb group protein Asx (1669 aa).

A disordered region spans residues isoleucine 90–proline 109. The region spanning proline 215–serine 338 is the DEUBAD domain. Short sequence motifs (LXXLL motif) lie at residues leucine 224–leucine 228 and leucine 244–leucine 248. The short motif at asparagine 283–phenylalanine 285 is the NEF motif element. Basic and acidic residues predominate over residues lysine 336–asparagine 352. Disordered stretches follow at residues lysine 336–threonine 378, serine 410–asparagine 478, phenylalanine 635–alanine 718, methionine 952–arginine 972, glutamine 1174–leucine 1193, proline 1398–leucine 1437, leucine 1482–serine 1505, and serine 1587–histidine 1610. 3 stretches are compositionally biased toward polar residues: residues alanine 367 to threonine 378, phenylalanine 413 to glutamate 425, and proline 434 to threonine 450. Basic and acidic residues predominate over residues lysine 465–glutamate 474. Low complexity predominate over residues phenylalanine 635–asparagine 650. A compositionally biased stretch (basic and acidic residues) spans lysine 651–aspartate 661. Positions isoleucine 666–alanine 718 are enriched in low complexity. Composition is skewed to low complexity over residues glutamine 1174–glutamine 1192 and threonine 1404–glutamine 1436. The span at proline 1592–histidine 1610 shows a compositional bias: low complexity. Residues glutamine 1602–cysteine 1666 form a PHD-type; atypical zinc finger.

This sequence belongs to the Asx family. In terms of assembly, component of the polycomb repressive deubiquitinase (PR-DUB) complex, at least composed of caly/calypso, Asx and sba (MBD5/6 homolog). Interacts (via DEUBAD domain) with caly/calypso (via ULD domain); the interaction produces a stable heterodimer with a composite binding site for ubiquitin. Two copies of the caly-Asx heterodimer assemble into a bidentate tetramer. Interacts (via PHD domain) with sba (probably via MBD domain); the interaction is important for the stability of the PR-DUB complex. Interacts with tant. Interacts with cyclin CycG. As to expression, highly expressed in nurse cells and deposited in oocytes late in oogenesis. Ubiquitous in early embryos. Late embryos show higher levels in CNS and neurectoderm.

It localises to the nucleus. Its subcellular location is the chromosome. Functionally, non-catalytic component of the polycomb repressive deubiquitinase (PR-DUB) complex, a complex that specifically mediates deubiquitination of histone H2A monoubiquitinated at 'Lys-119' (H2AK118ub1). Activator of the PR-DUB complex involved in ubiquitin binding and allosteric activation of calypso deubiquitinase activity. PR-DUB does not deubiquitinate monoubiquitinated histone H2B. PR-DUB is required to maintain the transcriptionally repressive state of homeotic genes throughout development. The PR-DUB complex has weak or no activity toward 'Lys-48'- and 'Lys-63'-linked polyubiquitin chains. Atypical Polycomb group protein, which may be involved in both Polycomb group (PcG) and trithorax group (trxG) complexes. PcG and trxG proteins act by forming multiprotein complexes, which are respectively required to maintain the transcriptionally repressive and transcriptionally active state of homeotic genes throughout development. PcG and trxG protein complexes are not required to initiate repression and activation, but to maintain it during later stages of development. In Drosophila melanogaster (Fruit fly), this protein is Polycomb group protein Asx.